We begin with the raw amino-acid sequence, 186 residues long: TATA-box-binding protein B (186 aa).

Tandem repeats lie at residues Ile-10 to Ile-86 and Val-101 to Leu-179.

It belongs to the TBP family.

In terms of biological role, general factor that plays a role in the activation of archaeal genes transcribed by RNA polymerase. Binds specifically to the TATA box promoter element which lies close to the position of transcription initiation. In Halobacterium salinarum (strain ATCC 700922 / JCM 11081 / NRC-1) (Halobacterium halobium), this protein is TATA-box-binding protein B (tbpB1).